The primary structure comprises 294 residues: Putative immediate early glycoprotein (294 aa).

A signal peptide spans Met-1 to Thr-21. Residues Leu-262 to Ile-282 form a helical membrane-spanning segment.

Belongs to the herpesviridae immediate early glycoprotein family.

Its subcellular location is the host membrane. The chain is Putative immediate early glycoprotein (U18) from Homo sapiens (Human).